The following is a 1310-amino-acid chain: MAQLWLSCFLLPALVVSVAANVAPKFLANMTSVILPEDLPVGAQAFWLVAEDQDNDPLTYGMSGPNAYFFAVTPKTGEVKLASALDYETLYTFKVTISVSDPYIQVQREMLVIVEDRNDNAPVFQNTAFSTSINETLPVGSVVFSVLAVDKDMGSAGMVVYSIEKVIPSTGDSEHLFRILANGSIVLNGSLSYNNKSAFYQLELKACDLGGMYHNTFTIQCSLPVFLSISVVDQPDLDPQFVREFYSASVAEDAAKGTSVLTVEAVDGDKGINDPVIYSISYSTRPGWFDIGADGVIRVNGSLDREQLLEADEEVQLQVTATETHLNIYGQEAKVSIWVTVRVMDVNDHKPEFYNCSLPACTFTPEEAQVNFTGYVDEHASPRIPIDDLTMVVYDPDKGSNGTFLLSLGGPDAEAFSVSPERAVGSASVQVLVRVSALVDYERQTAMAVQVVATDSVSQNFSVAMVTIHLRDINDHRPTFPQSLYVLTVPEHSATGSVVTDSIHATDPDTGAWGQITYSLLPGNGADLFQVDPVSGTVTVRNGELLDRESQAVYYLTLQATDGGNLSSSTTLQIHLLDINDNAPVVSGSYNIFVQEEEGNVSVTIQAHDNDEPGTNNSRLLFNLLPGPYSHNFSLDPDTGLLRNLGPLDREAIDPALEGRIVLTVLVSDCGEPVLGTKVNVTITVEDINDNLPIFNQSSYNFTVKEEDPGVLVGVVKAWDADQTEANNRISFSLSGSGANYFMIRGLVLGAGWAEGYLRLPPDVSLDYETQPVFNLTVSAENPDPQGGETIVDVCVNVKDVNDNPPTLDVASLRGIRVAENGSQHGQVAVVVASDVDTSAQLEIQLVNILCTKAGVDVGSLCWGWFSVAANGSVYINQSKAIDYEACDLVTLVVRACDLATDPGFQAYSNNGSLLITIEDVNDNAPYFLPENKTFVIIPELVLPNREVASVRARDDDSGNNGVILFSILRVDFISKDGATIPFQGVFSIFTSSEADVFAGSIQPVTSLDSTLQGTYQVTVQARDRPSLGPFLEATTTLNLFTVDQSYRSRLQFSTPKEEVGANRQAINAALTQATRTTVYIVDIQDIDSAARARPHSYLDAYFVFPNGSALTLDELSVMIRNDQDSLTQLLQLGLVVLGSQESQESDLSKQLISVIIGLGVALLLVLVIMTMAFVCVRKSYNRKLQAMKAAKEARKTAAGVMPSAPAIPGTNMYNTERANPMLNLPNKDLGLEYLSPSNDLDSVSVNSLDDNSVDVDKNSQEIKEHRPPHTPPEPDPEPLSVVLLGRQAGASGQLEGPSYTNAGLDTTDL.

Residues 1 to 20 (MAQLWLSCFLLPALVVSVAA) form the signal peptide. At 21–1154 (NVAPKFLANM…ESDLSKQLIS (1134 aa)) the chain is on the extracellular side. 3 Cadherin domains span residues 27–124 (LANM…APVF), 125–241 (QNTA…DPQF), and 242–353 (VREF…KPEF). 24 N-linked (GlcNAc...) asparagine glycosylation sites follow: Asn-29, Asn-134, Asn-182, Asn-188, Asn-195, Asn-300, Asn-355, Asn-371, Asn-401, Asn-460, Asn-565, Asn-600, Asn-616, Asn-632, Asn-680, Asn-696, Asn-701, Asn-775, Asn-821, Asn-871, Asn-877, Asn-911, Asn-932, and Asn-1107. 6 consecutive Cadherin domains span residues 368–480 (AQVN…RPTF), 481–586 (PQSL…APVV), 586–695 (VSGS…LPIF), 696–808 (NQSS…PPTL), 810–928 (VASL…APYF), and 930–1058 (PENK…TPKE). Residues 1155–1175 (VIIGLGVALLLVLVIMTMAFV) form a helical membrane-spanning segment. At 1176-1310 (CVRKSYNRKL…TNAGLDTTDL (135 aa)) the chain is on the cytoplasmic side. The tract at residues 1180 to 1310 (SYNRKLQAMK…TNAGLDTTDL (131 aa)) is mediates interaction with USH1C and MYO7B and is required for proper localization to microvilli tips and function in microvilli organization. A Phosphoserine modification is found at Ser-1248. A compositionally biased stretch (basic and acidic residues) spans 1259-1268 (NSQEIKEHRP). The disordered stretch occupies residues 1259 to 1310 (NSQEIKEHRPPHTPPEPDPEPLSVVLLGRQAGASGQLEGPSYTNAGLDTTDL). The residue at position 1299 (Ser-1299) is a Phosphoserine. The span at 1299–1310 (SYTNAGLDTTDL) shows a compositional bias: polar residues.

Part of the IMAC/intermicrovillar adhesion complex/intermicrovillar tip-link complex composed of ANKS4B, MYO7B, USH1C, CDHR2 and CDHR5. Interacts with MAST2. Interacts (via cytoplasmic domain) with USH1C and MYO7B; required for proper localization of CDHR2 to microvilli tips and its function in brush border differentiation. In terms of tissue distribution, highly expressed in liver, kidney and colon. Moderately expressed in small intestine. Down-regulated in a number of liver and colon cancers. Expressed in duodenum with higher expression in enterocytes along the villus axis and lower expression in crypts (at protein level).

The protein localises to the apical cell membrane. It localises to the cell projection. Its subcellular location is the microvillus membrane. It is found in the cell junction. Its function is as follows. Intermicrovillar adhesion molecule that forms, via its extracellular domain, calcium-dependent heterophilic complexes with CDHR5 on adjacent microvilli. Thereby, controls the packing of microvilli at the apical membrane of epithelial cells. Through its cytoplasmic domain, interacts with microvillus cytoplasmic proteins to form the intermicrovillar adhesion complex/IMAC. This complex plays a central role in microvilli and epithelial brush border differentiation. May also play a role in cell-cell adhesion and contact inhibition in epithelial cells. In Homo sapiens (Human), this protein is Cadherin-related family member 2.